The sequence spans 347 residues: UDP-3-O-acylglucosamine N-acyltransferase 1 (347 aa).

Catalysis depends on His246, which acts as the Proton acceptor.

The protein belongs to the transferase hexapeptide repeat family. LpxD subfamily. In terms of assembly, homotrimer.

It catalyses the reaction a UDP-3-O-[(3R)-3-hydroxyacyl]-alpha-D-glucosamine + a (3R)-hydroxyacyl-[ACP] = a UDP-2-N,3-O-bis[(3R)-3-hydroxyacyl]-alpha-D-glucosamine + holo-[ACP] + H(+). Its pathway is bacterial outer membrane biogenesis; LPS lipid A biosynthesis. Catalyzes the N-acylation of UDP-3-O-acylglucosamine using 3-hydroxyacyl-ACP as the acyl donor. Is involved in the biosynthesis of lipid A, a phosphorylated glycolipid that anchors the lipopolysaccharide to the outer membrane of the cell. In Francisella tularensis subsp. holarctica (strain LVS), this protein is UDP-3-O-acylglucosamine N-acyltransferase 1.